The following is a 131-amino-acid chain: Glycine cleavage system H protein (131 aa).

One can recognise a Lipoyl-binding domain in the interval Thr24–Lys106. An N6-lipoyllysine modification is found at Lys65.

The protein belongs to the GcvH family. In terms of assembly, the glycine cleavage system is composed of four proteins: P, T, L and H. (R)-lipoate serves as cofactor.

Functionally, the glycine cleavage system catalyzes the degradation of glycine. The H protein shuttles the methylamine group of glycine from the P protein to the T protein. The sequence is that of Glycine cleavage system H protein from Chromohalobacter salexigens (strain ATCC BAA-138 / DSM 3043 / CIP 106854 / NCIMB 13768 / 1H11).